The chain runs to 140 residues: Translation initiation factor 2 subunit beta (140 aa).

It belongs to the eIF-2-beta/eIF-5 family. Heterotrimer composed of an alpha, a beta and a gamma chain.

EIF-2 functions in the early steps of protein synthesis by forming a ternary complex with GTP and initiator tRNA. The chain is Translation initiation factor 2 subunit beta (eif2b) from Pyrococcus horikoshii (strain ATCC 700860 / DSM 12428 / JCM 9974 / NBRC 100139 / OT-3).